The chain runs to 155 residues: Desiccation-related protein clone PCC6-19 (155 aa).

Positions 1 to 155 are disordered; sequence MAQFGGEKYG…IKEKLPGGQH (155 aa). Gly residues-rich tracts occupy residues 27–39 and 47–76; these read AHRGGGIMGGGQQ and GVLGHGTAGQHGTTGGGLGHGTAGTGGALG. The span at 83 to 92 shows a compositional bias: low complexity; the sequence is GSSSSSSSSE. Residues 118-135 are compositionally biased toward polar residues; it reads TTTDQQQYGTAATHGQAQ. Positions 136-155 are enriched in basic and acidic residues; the sequence is QHEKKGIMDKIKEKLPGGQH.

It belongs to the plant dehydrin family.

This chain is Desiccation-related protein clone PCC6-19, found in Craterostigma plantagineum (Blue gem).